Here is a 130-residue protein sequence, read N- to C-terminus: Small ribosomal subunit protein uS9 (130 aa).

This sequence belongs to the universal ribosomal protein uS9 family.

The sequence is that of Small ribosomal subunit protein uS9 from Pseudomonas putida (strain ATCC 700007 / DSM 6899 / JCM 31910 / BCRC 17059 / LMG 24140 / F1).